Here is a 726-residue protein sequence, read N- to C-terminus: Catalase-peroxidase 1 (726 aa).

Residues 1–33 (MSTSDDIHNTTATGKCPFHQGGHDQSAGAGTTT) are disordered. A cross-link (tryptophyl-tyrosyl-methioninium (Trp-Tyr) (with M-252)) is located at residues 105 to 226 (WHGAGTYRSI…LGATEMGLIY (122 aa)). The Proton acceptor role is filled by His106. Positions 226 to 252 (YVNPEGPDHSGEPLSAAAAIRATFGNM) form a cross-link, tryptophyl-tyrosyl-methioninium (Tyr-Met) (with W-105). His267 provides a ligand contact to heme b.

This sequence belongs to the peroxidase family. Peroxidase/catalase subfamily. Homodimer or homotetramer. Requires heme b as cofactor. Post-translationally, formation of the three residue Trp-Tyr-Met cross-link is important for the catalase, but not the peroxidase activity of the enzyme.

It carries out the reaction H2O2 + AH2 = A + 2 H2O. The catalysed reaction is 2 H2O2 = O2 + 2 H2O. Its function is as follows. Bifunctional enzyme with both catalase and broad-spectrum peroxidase activity. The chain is Catalase-peroxidase 1 from Escherichia coli O157:H7.